Consider the following 555-residue polypeptide: Protein tyrosine phosphatase-like protein egg-3 (555 aa).

2 short sequence motifs (D-box) span residues 96 to 99 (RILL) and 130 to 133 (RDRL). The Tyrosine-protein phosphatase domain occupies 207–514 (FVQEFNRLDR…LFIYRVILRW (308 aa)). The short motif at 253 to 256 (RVKL) is the RXXL motif; required for cortical localization element. The RXXL motif motif lies at 266–269 (RNEL). 2 consecutive short sequence motifs (RXXL motif; required for cortical localization) follow at residues 509-512 (RVIL) and 525-528 (RAAL).

The protein belongs to the protein-tyrosine phosphatase family. Part of a complex, consisting of pseudophosphatases egg-3, egg-4, egg-5 and kinase mbk-2; this complex is required for the oocyte-to-zygote transition. Interacts (via tyrosine-protein phosphatase domain) with kinase mbk-2 (via N-terminus); the interaction does not affect mbk-2 kinase activity, is enhanced by mbk-2 tyrosine phosphorylation status and requires prior binding of mbk-2 to egg-4 and egg-5. Interacts with egg-4.

Its subcellular location is the cytoplasm. The protein localises to the cell cortex. Its function is as follows. Probable pseudophosphatase required for the oocyte-to-zygote transition during which it regulates the polarized dispersal of the cortical actin cytoskeleton, the synthesis of the eggshell chitin layer and the formation of the polar bodies after meiosis I and II. Acts as a scaffold to tether kinase mbk-2 and pseudophosphatases egg-4 and egg-5 to the oocyte cortex and thus restricts mbk-2 activity to the cortex during meiosis I. Regulates mbk-2 localization to cytoplasmic foci during meiosis II. Also required for chitin synthase chs-1 localization to the cell cortex of unfertilized oocytes and to cytoplasmic foci in the fertilized embryo. The polypeptide is Protein tyrosine phosphatase-like protein egg-3 (Caenorhabditis elegans).